A 141-amino-acid chain; its full sequence is Large ribosomal subunit protein uL11 (141 aa).

Belongs to the universal ribosomal protein uL11 family. As to quaternary structure, part of the ribosomal stalk of the 50S ribosomal subunit. Interacts with L10 and the large rRNA to form the base of the stalk. L10 forms an elongated spine to which L12 dimers bind in a sequential fashion forming a multimeric L10(L12)X complex. Post-translationally, one or more lysine residues are methylated.

Forms part of the ribosomal stalk which helps the ribosome interact with GTP-bound translation factors. The protein is Large ribosomal subunit protein uL11 of Roseiflexus castenholzii (strain DSM 13941 / HLO8).